Here is a 30-residue protein sequence, read N- to C-terminus: Putative cytochrome bd-II ubiquinol oxidase subunit AppX (30 aa).

Residues 4-24 (LLWFVGILLMCSLSTLVLVWL) traverse the membrane as a helical segment.

Belongs to the cytochrome ubiquinol oxidase subunit X family. In terms of assembly, able to interact with CydA and CydB upon overexpression.

Its subcellular location is the cell inner membrane. In terms of biological role, might be part of cytochrome bd-II oxidase (appB and appC). Able to restore reductant resistance to a cydX deletion mutant upon overexpression. CydX and this protein may have some functional overlap. This Escherichia coli (strain K12) protein is Putative cytochrome bd-II ubiquinol oxidase subunit AppX (appX).